A 160-amino-acid chain; its full sequence is MFPMVTGFMNYGQQTVRAARYIGQGFVITLSHANRLPVTIQYPYEKLIASERFRGRIHFEFDKCIACEVCVRVCPIDLPVVDWKLETDIRKKRLLNYSIDFGICIFCGNCVEYCPTNCLSMTEEYELSTYDRHELNYNQISLGRLPMSVVDDYTIRTILN.

4Fe-4S ferredoxin-type domains lie at 55–84 (GRIH…VDWK) and 95–124 (LNYS…MTEE). The [4Fe-4S] cluster site is built by cysteine 64, cysteine 67, cysteine 70, cysteine 74, cysteine 104, cysteine 107, cysteine 110, and cysteine 114.

This sequence belongs to the complex I 23 kDa subunit family. NDH is composed of at least 16 different subunits, 5 of which are encoded in the nucleus. Requires [4Fe-4S] cluster as cofactor.

The protein resides in the plastid. It is found in the chloroplast thylakoid membrane. It carries out the reaction a plastoquinone + NADH + (n+1) H(+)(in) = a plastoquinol + NAD(+) + n H(+)(out). The catalysed reaction is a plastoquinone + NADPH + (n+1) H(+)(in) = a plastoquinol + NADP(+) + n H(+)(out). Functionally, NDH shuttles electrons from NAD(P)H:plastoquinone, via FMN and iron-sulfur (Fe-S) centers, to quinones in the photosynthetic chain and possibly in a chloroplast respiratory chain. The immediate electron acceptor for the enzyme in this species is believed to be plastoquinone. Couples the redox reaction to proton translocation, and thus conserves the redox energy in a proton gradient. The protein is NAD(P)H-quinone oxidoreductase subunit I, chloroplastic of Cucumis sativus (Cucumber).